The sequence spans 256 residues: Diaminopimelate epimerase (256 aa).

Positions 11 and 63 each coordinate substrate. Residue C72 is the Proton donor of the active site. Substrate is bound by residues 73-74, N169, and 187-188; these read GN and ER. Catalysis depends on C197, which acts as the Proton acceptor. A substrate-binding site is contributed by 198-199; it reads GT.

Belongs to the diaminopimelate epimerase family. Homodimer.

Its subcellular location is the cytoplasm. It carries out the reaction (2S,6S)-2,6-diaminopimelate = meso-2,6-diaminopimelate. It participates in amino-acid biosynthesis; L-lysine biosynthesis via DAP pathway; DL-2,6-diaminopimelate from LL-2,6-diaminopimelate: step 1/1. Catalyzes the stereoinversion of LL-2,6-diaminopimelate (L,L-DAP) to meso-diaminopimelate (meso-DAP), a precursor of L-lysine and an essential component of the bacterial peptidoglycan. The sequence is that of Diaminopimelate epimerase from Flavobacterium psychrophilum (strain ATCC 49511 / DSM 21280 / CIP 103535 / JIP02/86).